A 328-amino-acid chain; its full sequence is Sterol demethylase protein B (328 aa).

Belongs to the NAD(P)-dependent epimerase/dehydratase family.

It catalyses the reaction a 3beta-hydroxy-4alpha-methylsteroid-4beta-carboxylate + NAD(+) = a 4alpha-methyl-3-oxosteroid + CO2 + NADH. It carries out the reaction a 3beta-hydroxy-4alpha-methylsteroid-4beta-carboxylate + NADP(+) = a 4alpha-methyl-3-oxosteroid + CO2 + NADPH. The enzyme catalyses 4beta-carboxy-4alpha-methyl-5alpha-cholesta-8,24-dien-3beta-ol + NAD(+) = 3-dehydro-4alpha-methylzymosterol + CO2 + NADH. The catalysed reaction is 4beta-carboxy-4alpha-methyl-5alpha-cholesta-8,24-dien-3beta-ol + NADP(+) = 3-dehydro-4alpha-methylzymosterol + CO2 + NADPH. It catalyses the reaction 3-dehydro-4alpha-methylzymosterol + NADPH + H(+) = 4alpha-methylzymosterol + NADP(+). It participates in steroid biosynthesis; sterol biosynthesis. Participates in the biosynthesis of bacterial sterols. Together with SdmA, removes one methyl group from the C-4 position of 4,4-dimethylated steroid molecules. SdmB catalyzes an oxidative decarboxylation that results in reduction of the 3beta-hydroxy group at the C-3 carbon to an oxo group. It also functions as a ketoreductase that converts the C-3 oxo group back to a hydroxyl group after C-4 demethylation. This Methylococcus capsulatus (strain ATCC 33009 / NCIMB 11132 / Bath) protein is Sterol demethylase protein B.